A 132-amino-acid polypeptide reads, in one-letter code: MKGLGSTIVRSLPNGARLVCADNTGAKELEVIAVKNYSGTVRRLPSAGVGQIVFVSVKKGTPEMRKQVLPAIIIRQKKEYKRADGTRVKFEDNAAVIVTPEGTPKGSDIKGPVSKEAAERWPGVSRLAKIIH.

Belongs to the universal ribosomal protein uL14 family. Part of the 50S ribosomal subunit. Forms a cluster with proteins L3 and L24e, part of which may contact the 16S rRNA in 2 intersubunit bridges.

Binds to 23S rRNA. Forms part of two intersubunit bridges in the 70S ribosome. The chain is Large ribosomal subunit protein uL14 from Methanococcus vannielii.